The chain runs to 428 residues: Monocarboxylate transporter 13 (428 aa).

The Cytoplasmic segment spans residues 1-10; that stretch reads MVHRTEPPDG. 12 helical membrane-spanning segments follow: residues 11–31, 52–72, 81–101, 106–126, 139–159, 172–192, 221–241, 244–264, 283–303, 309–329, 338–358, and 374–394; these read GWGWMVVLSAFFQSALVFGVL, VSWIASIGIAVQQFGSPIGSA, PVVMTGGILAALGMLLASFAT, LYLSIGLLSGSGWALTFTPTL, LAMGLALTGVGISSFAFAPLF, LLLVSALSLHLVACGALLRPL, VALTLINTGYFIPYVHLVAHL, LGWDPLPAAFLLSVAAISDLV, LLMLWTTLTGVSLALFPVAQA, VLAVAYGFTSGALTPVAFSVI, IYCGLGLVQMIESVGGLLGAP, and FVVAGAFLLAGSGVLITLPHF. Over 395-428 the chain is Cytoplasmic; the sequence is FSCISLSTSRPQDLVIEAPDTKIPLPKEEGLGEN.

The protein belongs to the major facilitator superfamily. Monocarboxylate porter (TC 2.A.1.13) family.

The protein resides in the golgi apparatus membrane. The protein localises to the cell membrane. Its function is as follows. Proton-linked monocarboxylate transporter. May catalyze the transport of monocarboxylates across the plasma membrane. The sequence is that of Monocarboxylate transporter 13 (Slc16a13) from Rattus norvegicus (Rat).